The following is a 235-amino-acid chain: Segregation and condensation protein A (235 aa).

Belongs to the ScpA family. In terms of assembly, component of a cohesin-like complex composed of ScpA, ScpB and the Smc homodimer, in which ScpA and ScpB bind to the head domain of Smc. The presence of the three proteins is required for the association of the complex with DNA.

The protein resides in the cytoplasm. In terms of biological role, participates in chromosomal partition during cell division. May act via the formation of a condensin-like complex containing Smc and ScpB that pull DNA away from mid-cell into both cell halves. This chain is Segregation and condensation protein A, found in Streptococcus equi subsp. zooepidemicus (strain MGCS10565).